Here is an 85-residue protein sequence, read N- to C-terminus: Beta-insect depressant toxin Lqh-dprIT3h (85 aa).

The N-terminal stretch at 1–21 is a signal peptide; that stretch reads MKLLLLLTISASMLIEGLVNA. The LCN-type CS-alpha/beta domain occupies 22–82; the sequence is DGYIRGGDGC…EWDYETDTCG (61 aa). Cystine bridges form between C31–C81, C35–C56, C42–C63, and C46–C65. Position 82 is a glycine amide (G82).

Belongs to the long (4 C-C) scorpion toxin superfamily. Sodium channel inhibitor family. Beta subfamily. Expressed by the venom gland.

It localises to the secreted. Depressant insect beta-toxins cause a transient contraction paralysis followed by a slow flaccid paralysis. They bind voltage-independently at site-4 of sodium channels (Nav) and block action potentials, primarily by depolarizing the axonal membrane and suppressing the sodium current. This depressant toxin is active only on insects. It is found in a relatively small amount in the venom. The chain is Beta-insect depressant toxin Lqh-dprIT3h from Leiurus hebraeus (Hebrew deathstalker scorpion).